Here is a 171-residue protein sequence, read N- to C-terminus: MSPKDLTPFLTTLWLLLGHSRVPRVRAEECCEFINVNHPPERCYDFKMCNRFTVALRCPDGEVCYSPEKTAEIRGIVTTMTHSLTRQVVHNKLTSCNYNPLYLEADGRIRCGKVNDKAQYLLGAAGSVPYRWINLEYDKITRIVGLDQYLESVKKHKRLDVCRAKMGYMLQ.

It belongs to the HHV-5 UL128 protein family. Forms the envelope pentamer complex (PC) composed of gH, gL, UL128, UL130, and UL131A. The pentamer interacts with host NRP2.

It is found in the virion membrane. Functionally, plays a role in viral entry into host cells. Forms a pentameric complex at the surface of the viral envelope together with gH, gL, UL130 and UL131. This complex is required for entry in epithelial, endothelial and myeloid host cells. Mechanistically, engages host receptor(s) including neurophilin 2/NRP2 to mediate infection. Additionally, monomeric UL128 may interfere with certain inflammatory cytokines to increase infection and dissemination by blocking monocytes migration. This is an uncharacterized protein from Human cytomegalovirus (strain AD169) (HHV-5).